Consider the following 100-residue polypeptide: Large ribosomal subunit protein uL23 (100 aa).

This sequence belongs to the universal ribosomal protein uL23 family. In terms of assembly, part of the 50S ribosomal subunit. Contacts protein L29, and trigger factor when it is bound to the ribosome.

Its function is as follows. One of the early assembly proteins it binds 23S rRNA. One of the proteins that surrounds the polypeptide exit tunnel on the outside of the ribosome. Forms the main docking site for trigger factor binding to the ribosome. In Shewanella oneidensis (strain ATCC 700550 / JCM 31522 / CIP 106686 / LMG 19005 / NCIMB 14063 / MR-1), this protein is Large ribosomal subunit protein uL23.